The primary structure comprises 150 residues: MKLILIKDCPSGKANTIVEVSDGYAKNFLIPRKFAIAYTEENAKKLKQKLEQEKLDFSLKTKEFLELKEKLEKLKLTFKLKASLDKNHKLETHHSISAKKLLERLHELGFDLPKHSIEKVHLNLIGINHVNVKLFDKIVAKLTVVIEADV.

This sequence belongs to the bacterial ribosomal protein bL9 family.

Binds to the 23S rRNA. The chain is Large ribosomal subunit protein bL9 from Mycoplasmopsis pulmonis (strain UAB CTIP) (Mycoplasma pulmonis).